The primary structure comprises 255 residues: Snake venom serine protease HS112 (255 aa).

A signal peptide spans Met1–Ala18. A propeptide spanning residues Gln19–Leu24 is cleaved from the precursor. Positions Val25–Ala246 constitute a Peptidase S1 domain. Disulfide bonds link Cys31/Cys162, Cys49/Cys65, Cys97/Cys253, Cys141/Cys207, Cys173/Cys186, and Cys197/Cys222. Catalysis depends on charge relay system residues His64 and Asp109. A glycan (N-linked (GlcNAc...) asparagine) is linked at Asn169. The Charge relay system role is filled by Ser201. Asn248 is a glycosylation site (N-linked (GlcNAc...) asparagine).

The protein belongs to the peptidase S1 family. Snake venom subfamily. In terms of assembly, monomer. As to expression, expressed by the venom gland.

It is found in the secreted. Snake venom serine protease that may act in the hemostasis system of the prey. The polypeptide is Snake venom serine protease HS112 (Bothrops jararaca (Jararaca)).